Reading from the N-terminus, the 132-residue chain is Translation initiation factor 5A (132 aa).

A Hypusine modification is found at Lys36.

It belongs to the eIF-5A family.

It localises to the cytoplasm. Functionally, functions by promoting the formation of the first peptide bond. This Thermofilum pendens (strain DSM 2475 / Hrk 5) protein is Translation initiation factor 5A (eIF5A).